The chain runs to 609 residues: MCGIVGAVAQRDVAEILVEGLRRLEYRGYDSAGVAVIHNGELNRTRRVGKVQELSAALETDPLAGGTGIAHTRWATHGEPSERNAHPHLSEGDIAVVHNGIIENHHKLREMLKEHGYHFSSDTDTEVICHLVHHQLKTNDSLLAAVQATVKQLEGAYGTVVIDRRDSERMVVARSGSPLVIGFGLGENFVASDQLALLPVTRSFAFLEEGDVAEVTRRTVSIFDVHGNKVEREVKESEITHDAGDKGEYRHYMLKEIYEQPLALTRTIEGRIANKQVLDTAFGDNAAEFLKDIKHVQIIACGTSYHAGMAARYWLEDWAGVSCNVEIASEFRYRKSHLFPNSLLVTISQSGETADTLAAMRLAKEMGYKATLTICNAPGSSLVRESDMAYMMKAGAEIGVASTKAFTVQLAGLLMLTAVIGRHNGMSEQMQAEITQSLQSMPAKVEQALGLDDAIAELAEDFADKHHALFLGRGDQYPIAMEGALKLKEISYIHAEAYASGELKHGPLALIDADMPVIVVAPNNELLEKLKSNVEEVRARGGLMYVFADVDAEFESDDTMKVIPVPHCDIFMAPLIYTIPLQLLSYHVALIKGTDVDQPRNLAKSVTVE.

Cys2 functions as the Nucleophile; for GATase activity in the catalytic mechanism. Residues 2-218 (CGIVGAVAQR…EGDVAEVTRR (217 aa)) enclose the Glutamine amidotransferase type-2 domain. 2 consecutive SIS domains span residues 286-426 (AAEF…HNGM) and 458-599 (LAED…VDQP). Catalysis depends on Lys604, which acts as the For Fru-6P isomerization activity.

Homodimer.

It is found in the cytoplasm. The catalysed reaction is D-fructose 6-phosphate + L-glutamine = D-glucosamine 6-phosphate + L-glutamate. Functionally, catalyzes the first step in hexosamine metabolism, converting fructose-6P into glucosamine-6P using glutamine as a nitrogen source. This is Glutamine--fructose-6-phosphate aminotransferase [isomerizing] from Shewanella oneidensis (strain ATCC 700550 / JCM 31522 / CIP 106686 / LMG 19005 / NCIMB 14063 / MR-1).